Reading from the N-terminus, the 245-residue chain is Small ribosomal subunit protein uS2 (245 aa).

This sequence belongs to the universal ribosomal protein uS2 family.

This is Small ribosomal subunit protein uS2 from Pseudomonas putida (strain ATCC 47054 / DSM 6125 / CFBP 8728 / NCIMB 11950 / KT2440).